The primary structure comprises 85 residues: Large ribosomal subunit protein bL27 (85 aa).

Belongs to the bacterial ribosomal protein bL27 family.

The sequence is that of Large ribosomal subunit protein bL27 from Campylobacter curvus (strain 525.92).